The primary structure comprises 505 residues: L-carnitine/gamma-butyrobetaine antiporter (505 aa).

12 consecutive transmembrane segments (helical) span residues 10 to 30 (IEPKVFFPPLIIVGILCWLTV), 50 to 70 (IWGWAFEWYMVVMLIGWFWLV), 92 to 112 (IFMMFASCTSAAVLFWGSIEI), 143 to 163 (GPLPWATYSFLSVAFAYFFFV), 195 to 215 (FYLVALIFAMGTSLGLATPLV), 231 to 251 (LDAIIITCWIILNAICVACGL), 263 to 283 (SYLSFLMLGWVFIVSGASFIM), 316 to 336 (WTVFYWAWWVIYAIQMSIFLA), 347 to 367 (LCFGMVLGLTASTWILWTVLG), 403 to 423 (LSTATMWGFFILCFIATVTLI), 446 to 466 (LLVRIGWSVLVGIIGIVLLAL), and 475 to 495 (AIIAGGCPLFFVNIMVTLSFI).

This sequence belongs to the BCCT transporter (TC 2.A.15) family. CaiT subfamily. As to quaternary structure, homotrimer.

It localises to the cell inner membrane. The catalysed reaction is 4-(trimethylamino)butanoate(in) + (R)-carnitine(out) = 4-(trimethylamino)butanoate(out) + (R)-carnitine(in). It participates in amine and polyamine metabolism; carnitine metabolism. Functionally, catalyzes the exchange of L-carnitine for gamma-butyrobetaine. This chain is L-carnitine/gamma-butyrobetaine antiporter, found in Salmonella arizonae (strain ATCC BAA-731 / CDC346-86 / RSK2980).